Consider the following 180-residue polypeptide: Nucleoside triphosphate/diphosphate phosphatase (180 aa).

Arg-26 (proton donor) is an active-site residue. Asn-90, Asp-106, Asp-108, Asp-110, Asp-123, and Glu-126 together coordinate Mg(2+).

It belongs to the Ntdp family. Requires Mg(2+) as cofactor.

The catalysed reaction is a ribonucleoside 5'-triphosphate + H2O = a ribonucleoside 5'-diphosphate + phosphate + H(+). It carries out the reaction a ribonucleoside 5'-diphosphate + H2O = a ribonucleoside 5'-phosphate + phosphate + H(+). Functionally, has nucleoside phosphatase activity towards nucleoside triphosphates and nucleoside diphosphates. In Staphylococcus saprophyticus subsp. saprophyticus (strain ATCC 15305 / DSM 20229 / NCIMB 8711 / NCTC 7292 / S-41), this protein is Nucleoside triphosphate/diphosphate phosphatase.